A 30-amino-acid chain; its full sequence is Cyclotide mden-E (30 aa).

Positions 1–30 (GIPCGESCVYIPCITAAIGCSCKSKVCYRN) form a cross-link, cyclopeptide (Gly-Asn). Disulfide bonds link Cys4–Cys20, Cys8–Cys22, and Cys13–Cys27.

Belongs to the cyclotide family. Bracelet subfamily. Post-translationally, this is a cyclic peptide.

Probably participates in a plant defense mechanism. This is Cyclotide mden-E from Melicytus dentatus (Tree violet).